We begin with the raw amino-acid sequence, 365 residues long: Peptide chain release factor 2 (365 aa).

N5-methylglutamine is present on Q252.

This sequence belongs to the prokaryotic/mitochondrial release factor family. In terms of processing, methylated by PrmC. Methylation increases the termination efficiency of RF2.

It localises to the cytoplasm. Functionally, peptide chain release factor 2 directs the termination of translation in response to the peptide chain termination codons UGA and UAA. The polypeptide is Peptide chain release factor 2 (Klebsiella pneumoniae (strain 342)).